The sequence spans 212 residues: Thymidylate kinase (212 aa).

11-18 contacts ATP; it reads GPEGAGKT.

This sequence belongs to the thymidylate kinase family.

The catalysed reaction is dTMP + ATP = dTDP + ADP. Its function is as follows. Phosphorylation of dTMP to form dTDP in both de novo and salvage pathways of dTTP synthesis. This Streptococcus pneumoniae serotype 2 (strain D39 / NCTC 7466) protein is Thymidylate kinase.